A 265-amino-acid chain; its full sequence is NAD kinase 1 (265 aa).

The active-site Proton acceptor is the Asp-45. NAD(+) contacts are provided by residues 45 to 46 (DG), 122 to 123 (NE), Arg-148, Asp-150, and Ala-185.

The protein belongs to the NAD kinase family. Requires a divalent metal cation as cofactor.

The protein resides in the cytoplasm. The catalysed reaction is NAD(+) + ATP = ADP + NADP(+) + H(+). In terms of biological role, involved in the regulation of the intracellular balance of NAD and NADP, and is a key enzyme in the biosynthesis of NADP. Catalyzes specifically the phosphorylation on 2'-hydroxyl of the adenosine moiety of NAD to yield NADP. This chain is NAD kinase 1, found in Bacillus cereus (strain ATCC 10987 / NRS 248).